A 1164-amino-acid chain; its full sequence is MKKNTDSEMDQRLGYKFLVPDPKAGVFYRPLHFQYVSYSNFILHRLHEILTVKRPLLSFKNNTERIMIEISNVKVTPPDYSPIIASIKGKSYDALATFTVNIFKEVMTKEGISITKISSYEGKDSHLIKIPLLIGYGNKNPLDTAKYLVPNVIGGVFINKQSVEKVGINLVEKITTWPKFRVVKPNSFTFSFSSVSPPNVLPTRYRHYKISLDISQLEASNISSTKTFITVNIVLLSQYLSRVSLEFIRRSLSYDMPPEVVYLVNAIIDSAKRLTESITDFNIDTYINDLVEAEHIKQKSQLTINEFKYEMLYNFLPHMNYTPDQLKGFYMISLLRKFLYCIYHTSRYPDRDSMVCHRILTYGKYFETLAHDELENYIGNIRNDIMNNHKNRGTYAVNIHVLTTPGLNHAFSSLLSGKFKKSDGSYRTHPHYSWMQNISIPRSVGFYPDQVKISKMFSVRKYHPSQYLYFCSSDVPERGPQVGLVSQLSVLSSITNILTSEYLDLEKKICEYIRSYYKDDISYFETGFPITIENALVASLNPNMICDFVTDFRRRKRMGFFGNLEVGITLVRDHMNEIRINIGAGRLVRPFLVVDNGELMMDVCPELESRLDDMTFSDIQKEFPHVIEMVDIEQFTFSNVCESVQKFRMMSKDERKQYDLCDFPAEFRDGYVASSLVGINHNSGPRAILGCAQAKQAISCLSSDIRNKIDNGIHLMYPERPIVISKALETSKIAANCFGQHVTIALMSYKGINQEDGIIIKKQFIQRGGLDIVTAKKHQVEIPLENFNNKERDRSNAYSKLESNGLVRLNAFLESGDAMARNISSRTLEDDFARDNQISFDVSEKYTDMYKSRVERVQVELTDKVKVRVLTMKERRPILGDKFTTRTSQKGTVAYIADETELPYDENGITPDVIINSTSIFSRKTISMLIEVILTAAYSVKPYNNKGENRPVCFPSSNETSIDTYMQFAKQCYEHSNPKLSEEELSDKIFCEKILYDPETDKPYGSKVFFGPIYYLRLRHLTQDKATVRCRGKKTKLIRQANEGRKRGGGIKFGEMERDCLIAHGAANTITEVLKDSEEDYQDVYICENCGDIAAQIKSINTCLRCSKLNLSPLLTKIDTTHVSKVFLTQMNARGVKVKLDFERRPPSFYKPLDKVDLKPSFLK.

Belongs to the RNA polymerase beta chain family. The DNA-dependent RNA polymerase used for intermediate and late genes expression consists of eight subunits (147) kDa, (133) kDa, (35) kDa, (30) kDa, (22) kDa, (19) kDa, (18) kDa and (7) kDa totalling more than 500 kDa in mass. The same holoenzyme, with the addition of the transcription-specificity factor RAP94, is used for early gene expression.

Its subcellular location is the virion. The enzyme catalyses RNA(n) + a ribonucleoside 5'-triphosphate = RNA(n+1) + diphosphate. In terms of biological role, part of the DNA-dependent RNA polymerase which catalyzes the transcription of viral DNA into RNA using the four ribonucleoside triphosphates as substrates. Responsible for the transcription of early, intermediate and late genes. DNA-dependent RNA polymerase associates with the early transcription factor (ETF), itself composed of D6 and A7, thereby allowing the early genes transcription. Late transcription, and probably also intermediate transcription, require newly synthesized RNA polymerase. The chain is DNA-directed RNA polymerase 132 kDa polypeptide (RPO132) from Camelus.